The primary structure comprises 249 residues: Ribosomal RNA small subunit methyltransferase J (249 aa).

S-adenosyl-L-methionine-binding positions include 97 to 98 (RD), 113 to 114 (ER), and Asp167.

The protein belongs to the methyltransferase superfamily. RsmJ family.

It is found in the cytoplasm. The enzyme catalyses guanosine(1516) in 16S rRNA + S-adenosyl-L-methionine = N(2)-methylguanosine(1516) in 16S rRNA + S-adenosyl-L-homocysteine + H(+). Its function is as follows. Specifically methylates the guanosine in position 1516 of 16S rRNA. In Aeromonas salmonicida (strain A449), this protein is Ribosomal RNA small subunit methyltransferase J.